Here is an 812-residue protein sequence, read N- to C-terminus: Glycerol-3-phosphate acyltransferase (812 aa).

Positions cysteine 308–methionine 313 match the HXXXXD motif motif.

It belongs to the GPAT/DAPAT family.

It localises to the cell inner membrane. The catalysed reaction is sn-glycerol 3-phosphate + an acyl-CoA = a 1-acyl-sn-glycero-3-phosphate + CoA. It functions in the pathway phospholipid metabolism; CDP-diacylglycerol biosynthesis; CDP-diacylglycerol from sn-glycerol 3-phosphate: step 1/3. The chain is Glycerol-3-phosphate acyltransferase from Pseudoalteromonas translucida (strain TAC 125).